Reading from the N-terminus, the 648-residue chain is Macrolide export ATP-binding/permease protein MacB (648 aa).

Positions 5–243 constitute an ABC transporter domain; that stretch reads LELKDIRRSY…TGGTEPVVNT (239 aa). Residue 41 to 48 participates in ATP binding; that stretch reads GASGSGKS. The next 4 membrane-spanning stretches (helical) occupy residues 273–293, 523–543, 576–596, and 611–631; these read LLTMLGIIIGIASVVSIVVVG, LFLTLVAVISLVVGGIGVMNI, AVLVCLVGGALGITLSLLIAF, and PLALLLAFLCSTVTGILFGWL.

The protein belongs to the ABC transporter superfamily. Macrolide exporter (TC 3.A.1.122) family. In terms of assembly, homodimer. Part of the tripartite efflux system MacAB-TolC, which is composed of an inner membrane transporter, MacB, a periplasmic membrane fusion protein, MacA, and an outer membrane component, TolC. The complex forms a large protein conduit and can translocate molecules across both the inner and outer membranes. Interacts with MacA.

Its subcellular location is the cell inner membrane. Functionally, part of the tripartite efflux system MacAB-TolC. MacB is a non-canonical ABC transporter that contains transmembrane domains (TMD), which form a pore in the inner membrane, and an ATP-binding domain (NBD), which is responsible for energy generation. Confers resistance against macrolides. The polypeptide is Macrolide export ATP-binding/permease protein MacB (Escherichia coli O6:K15:H31 (strain 536 / UPEC)).